The primary structure comprises 185 residues: Probable RNA 2'-phosphotransferase (185 aa).

It belongs to the KptA/TPT1 family.

In terms of biological role, removes the 2'-phosphate from RNA via an intermediate in which the phosphate is ADP-ribosylated by NAD followed by a presumed transesterification to release the RNA and generate ADP-ribose 1''-2''-cyclic phosphate (APPR&gt;P). May function as an ADP-ribosylase. This Bacillus thuringiensis subsp. konkukian (strain 97-27) protein is Probable RNA 2'-phosphotransferase.